Here is a 377-residue protein sequence, read N- to C-terminus: Malate dehydrogenase, cytoplasmic (377 aa).

A Pro/N-degron motif is present at residues 2–5 (PHSV). Thr-6 is modified (phosphothreonine). NAD(+) is bound by residues 20 to 26 (GAAGGIG) and Asp-57. 2 residues coordinate substrate: Arg-106 and Arg-112. Residues Asn-119 and 144-146 (ISN) contribute to the NAD(+) site. Residues Asn-146 and Arg-185 each coordinate substrate. The active-site Proton acceptor is His-215. Residue Met-266 participates in NAD(+) binding.

The protein belongs to the LDH/MDH superfamily. MDH type 1 family. Homodimer. Targeted for proteasomal degradation when cells are shifted to glucose-containing growth medium.

It is found in the cytoplasm. The catalysed reaction is (S)-malate + NAD(+) = oxaloacetate + NADH + H(+). In terms of biological role, the isoenzyme MDH2 may function primarily in the glyoxylate cycle. The protein is Malate dehydrogenase, cytoplasmic (MDH2) of Saccharomyces cerevisiae (strain ATCC 204508 / S288c) (Baker's yeast).